Consider the following 764-residue polypeptide: Bifunctional type I diterpene synthase tndC (764 aa).

The segment at 1–324 is terpene cyclase; the sequence is MEYRYSTVVD…CPRYHPWSSY (324 aa). The Mg(2+) site is built by Asp92 and Asp96. The short motif at 92–96 is the DDXXD 1 element; sequence DDVTD. Residues 224 to 232 carry the NSE/DTE motif; it reads NDLYSWQKE. The interval 325 to 761 is prenyltransferase; the sequence is NERQLDWMKN…FQLRLILEML (437 aa). Positions 377–403 are disordered; the sequence is AVNGNGASHTSSIKGSTGGNGVTHSPV. Residues 381–391 are compositionally biased toward polar residues; that stretch reads NGASHTSSIKG. Residues Lys484, Arg487, and His516 each contribute to the isopentenyl diphosphate site. Positions 523 and 527 each coordinate Mg(2+). The short motif at 523–527 is the DDXXD 2 element; the sequence is DDLED. Residue Arg532 coordinates dimethylallyl diphosphate. Isopentenyl diphosphate is bound at residue Arg533. 6 residues coordinate dimethylallyl diphosphate: Lys610, Thr611, Gln646, Asn653, Lys663, and Lys673.

The protein in the N-terminal section; belongs to the terpene synthase family. This sequence in the C-terminal section; belongs to the FPP/GGPP synthase family.

It catalyses the reaction isopentenyl diphosphate + (2E,6E)-farnesyl diphosphate = (2E,6E,10E)-geranylgeranyl diphosphate + diphosphate. The catalysed reaction is (2E,6E,10E)-geranylgeranyl diphosphate = talarodiene + diphosphate. It participates in secondary metabolite biosynthesis; terpenoid biosynthesis. In terms of biological role, bifunctional type I diterpene synthase; part of the gene cluster that mediates the biosynthesis of talaronoid C, a fusicoccane diterpenoid with an unprecedented tricyclic 5/8/6 ring system. The first step in the pathway is performed by the fusicoccadiene synthase tndC that possesses both prenyl transferase and terpene cyclase activity, converting isopentenyl diphosphate and dimethylallyl diphosphate into geranylgeranyl diphosphate (GGDP) and further converting GGDP into talarodiene, a precursor for talaronoid C. The remaining enzymes from the cluster include the cytochrome P450 monooxygenase tndB, the aldehyde reductase tndE and the alcohol dehydrogenase tndF that are involved in the conversion of talarodiene into talaronoid C. The chain is Bifunctional type I diterpene synthase tndC from Aspergillus flavipes.